The following is a 404-amino-acid chain: Chorismate synthase (404 aa).

Arg-47 is an NADP(+) binding site. Residues 156 to 158, 281 to 282, Gly-321, 336 to 340, and Arg-363 contribute to the FMN site; these read RSS, NA, and KPTST.

This sequence belongs to the chorismate synthase family. In terms of assembly, homotetramer. The cofactor is FMNH2.

It carries out the reaction 5-O-(1-carboxyvinyl)-3-phosphoshikimate = chorismate + phosphate. It functions in the pathway metabolic intermediate biosynthesis; chorismate biosynthesis; chorismate from D-erythrose 4-phosphate and phosphoenolpyruvate: step 7/7. Functionally, catalyzes the anti-1,4-elimination of the C-3 phosphate and the C-6 proR hydrogen from 5-enolpyruvylshikimate-3-phosphate (EPSP) to yield chorismate, which is the branch point compound that serves as the starting substrate for the three terminal pathways of aromatic amino acid biosynthesis. This reaction introduces a second double bond into the aromatic ring system. This chain is Chorismate synthase, found in Rhodopirellula baltica (strain DSM 10527 / NCIMB 13988 / SH1).